The primary structure comprises 225 residues: NAD(P)H-quinone oxidoreductase subunit K, chloroplastic (225 aa).

[4Fe-4S] cluster contacts are provided by C43, C44, C108, and C139.

This sequence belongs to the complex I 20 kDa subunit family. In terms of assembly, NDH is composed of at least 16 different subunits, 5 of which are encoded in the nucleus. Requires [4Fe-4S] cluster as cofactor.

It localises to the plastid. Its subcellular location is the chloroplast thylakoid membrane. It catalyses the reaction a plastoquinone + NADH + (n+1) H(+)(in) = a plastoquinol + NAD(+) + n H(+)(out). It carries out the reaction a plastoquinone + NADPH + (n+1) H(+)(in) = a plastoquinol + NADP(+) + n H(+)(out). Functionally, NDH shuttles electrons from NAD(P)H:plastoquinone, via FMN and iron-sulfur (Fe-S) centers, to quinones in the photosynthetic chain and possibly in a chloroplast respiratory chain. The immediate electron acceptor for the enzyme in this species is believed to be plastoquinone. Couples the redox reaction to proton translocation, and thus conserves the redox energy in a proton gradient. The sequence is that of NAD(P)H-quinone oxidoreductase subunit K, chloroplastic from Nasturtium officinale (Watercress).